The primary structure comprises 158 residues: NADPH-dependent 7-cyano-7-deazaguanine reductase (158 aa).

The active-site Thioimide intermediate is the Cys56. The Proton donor role is filled by Asp63. Residues 78–80 (LES) and 97–98 (HE) each bind substrate.

It belongs to the GTP cyclohydrolase I family. QueF type 1 subfamily.

It localises to the cytoplasm. The enzyme catalyses 7-aminomethyl-7-carbaguanine + 2 NADP(+) = 7-cyano-7-deazaguanine + 2 NADPH + 3 H(+). The protein operates within tRNA modification; tRNA-queuosine biosynthesis. In terms of biological role, catalyzes the NADPH-dependent reduction of 7-cyano-7-deazaguanine (preQ0) to 7-aminomethyl-7-deazaguanine (preQ1). The sequence is that of NADPH-dependent 7-cyano-7-deazaguanine reductase from Nitrobacter hamburgensis (strain DSM 10229 / NCIMB 13809 / X14).